The chain runs to 413 residues: MRAAILSIGDELLLGEVVDTNASTIAARLYNLGVNLPLQMTVGDNIQDIVEACQLLAGKSDTVIVTGGLGPTVDDVTALAAAKLAGSPLEPNREALAHLKDFAERVAEKLHPANDKQSLMPASAKVIPNLVGTACGFSLVHDGCRFFFLPGVPGEMVSMLDETVLPALASSGRHKILRSKVFKVSGISEAELDAMLQGVTEGFAAASIAFCVNFPEIEVKIRVVADEKLTADKIIAIVGDKTRNILGSRVFAEDGETIDTVVAGLFKKTGATLSLAESCTGGLIAKRITDLSGSSAYFLEGLVTYSNRAKIDLLGVPAQLLEEKGAVSAEVAMAMARGAREKSGSDLALAVTGIAGPEGGSAEKPVGTVFMALAGQEQCRVRLFNFHGDREQVRLVTSFAALNWLRRELLARP.

The protein belongs to the CinA family.

The protein is CinA-like protein of Geotalea daltonii (strain DSM 22248 / JCM 15807 / FRC-32) (Geobacter daltonii).